Here is a 792-residue protein sequence, read N- to C-terminus: MAFSGIYKLDDGKPYLNNCFPARNLLRVPEEGQGHWLVVQKGNLKKKPKGLVGAQAERRESLKATSFEFKGKKESRRENQVDLPGHILDQAFLLKHHCVRKPSDLCTINAKENDFKHFHSVIYINASENLLPLEAFHTFPALKELDLAFNGIKTIYVKYGDFKLLEFLDLSFNSLTVEAICDLGILPHLRVLLLTGNGLTSLPPNLAVAEQEASVTSLTSKRYILRFPALETLMLDDNRLSNPSCFASLAGLRRLKKLSLDENRIIRIPYLQQVQLYDESVDWNGGRGSPHKEPQFMLQSKPRMLEDSDEQLDYTVLPMKKDVDRTEVVFSSYPGFSTSETTKICSLPPIFEILPVKSLKARNQTLAPPFPELRYLSLAYNKIAKEDAVLPVALFPSLCEFVFHNNPLVAHTRGVPPLLKSFLQERLGIHLIRRKIVKPKHHVLMSRKESWKVKSEIPKVPKQPLVLHHPRMTTTKSPSKDMLEPEAELAEDLPTTKSTSVESEMPTENLEGHSPSCRTFVPLPPICSNSTVHSEETLSHLSDTTVRLSPERPSDEDSKSTESIFLTQVSELPSSVIHKDDLELKEKDQKKPPTAPREVKGTRRKLPTAFLPSKYHGYEELLTAKPDPAFIEPKGIQKNAQALQQMLKHPLLCHSSKPKLDTLQKPYVHKEKRAQRIPIPPPKKTRAQLLDDIFIRLRDPRNITEAPLGAVLHQWTERRLVNHKQYLEAKRLLKEFQARYRQLVSGSLRTVFGTTPLPMACPALSESQPKFGHFLEFMDEFCQEPTASDSQG.

LRR repeat units lie at residues 104-125 (DLCT…IYIN), 141-155 (ALKE…IKTI), 164-184 (LLEF…CDLG), 188-209 (HLRV…LAVA), 229-250 (ALET…ASLA), and 254-275 (RLKK…QQVQ). Disordered regions lie at residues 490–517 (AEDL…SPSC), 537–562 (TLSH…KSTE), and 577–601 (IHKD…EVKG). Basic and acidic residues predominate over residues 549-560 (SPERPSDEDSKS). Residues 723–745 (HKQYLEAKRLLKEFQARYRQLVS) are a coiled coil.

Expressed predominantly in testis followed by prostate and ovary. Low levels found in other tissues including peripheral blood leukocytes, spleen, thymus, small intestine and colon. Also expressed in neuroblastoma, glioma, breast, lung, leukemia, renal, ovarian, prostate and colorectal cancer cell lines.

It is found in the cytoplasm. The protein resides in the nucleus. In terms of biological role, may be involved in the response of cells to X-ray radiation. In Homo sapiens (Human), this protein is X-ray radiation resistance-associated protein 1.